Consider the following 348-residue polypeptide: Aspartate carbamoyltransferase catalytic subunit (348 aa).

The carbamoyl phosphate site is built by R57 and T58. K86 contributes to the L-aspartate binding site. Carbamoyl phosphate contacts are provided by R107, H135, and Q138. Residues R172 and R234 each coordinate L-aspartate. Carbamoyl phosphate-binding residues include L274 and P275.

Belongs to the aspartate/ornithine carbamoyltransferase superfamily. ATCase family. Heterododecamer (2C3:3R2) of six catalytic PyrB chains organized as two trimers (C3), and six regulatory PyrI chains organized as three dimers (R2).

The catalysed reaction is carbamoyl phosphate + L-aspartate = N-carbamoyl-L-aspartate + phosphate + H(+). It participates in pyrimidine metabolism; UMP biosynthesis via de novo pathway; (S)-dihydroorotate from bicarbonate: step 2/3. Functionally, catalyzes the condensation of carbamoyl phosphate and aspartate to form carbamoyl aspartate and inorganic phosphate, the committed step in the de novo pyrimidine nucleotide biosynthesis pathway. This is Aspartate carbamoyltransferase catalytic subunit from Dichelobacter nodosus (strain VCS1703A).